The following is a 305-amino-acid chain: Methionyl-tRNA formyltransferase (305 aa).

Position 108–111 (serine 108–proline 111) interacts with (6S)-5,6,7,8-tetrahydrofolate.

It belongs to the Fmt family.

The enzyme catalyses L-methionyl-tRNA(fMet) + (6R)-10-formyltetrahydrofolate = N-formyl-L-methionyl-tRNA(fMet) + (6S)-5,6,7,8-tetrahydrofolate + H(+). Attaches a formyl group to the free amino group of methionyl-tRNA(fMet). The formyl group appears to play a dual role in the initiator identity of N-formylmethionyl-tRNA by promoting its recognition by IF2 and preventing the misappropriation of this tRNA by the elongation apparatus. This is Methionyl-tRNA formyltransferase from Clavibacter sepedonicus (Clavibacter michiganensis subsp. sepedonicus).